The following is a 228-amino-acid chain: Thymidine kinase (228 aa).

ATP is bound at residue glycine 23–serine 30. The active-site Proton acceptor is the glutamate 50. Residues tyrosine 68, glutamine 79, and phenylalanine 109 each coordinate substrate. Arginine 157 lines the ATP pocket.

The protein belongs to the DCK/DGK family.

The catalysed reaction is thymidine + ATP = dTMP + ADP + H(+). In Ictaluridae (bullhead catfishes), this protein is Thymidine kinase (TK).